Here is a 124-residue protein sequence, read N- to C-terminus: uncharacterized protein (124 aa).

Positions 1–65 are disordered; that stretch reads MAENSRYVRL…RPASSSNPDY (65 aa). The segment covering 37–47 has biased composition (polar residues); it reads LNSNDAESQQV.

This is an uncharacterized protein from Microplitis demolitor (Parasitoid wasp).